Reading from the N-terminus, the 209-residue chain is 3-demethoxyubiquinol 3-hydroxylase (209 aa).

Glu58, Glu88, His91, Glu140, Glu172, and His175 together coordinate Fe cation.

Belongs to the COQ7 family. The cofactor is Fe cation.

It localises to the cell membrane. It catalyses the reaction a 5-methoxy-2-methyl-3-(all-trans-polyprenyl)benzene-1,4-diol + AH2 + O2 = a 3-demethylubiquinol + A + H2O. Its pathway is cofactor biosynthesis; ubiquinone biosynthesis. In terms of biological role, catalyzes the hydroxylation of 2-nonaprenyl-3-methyl-6-methoxy-1,4-benzoquinol during ubiquinone biosynthesis. This is 3-demethoxyubiquinol 3-hydroxylase from Polaromonas naphthalenivorans (strain CJ2).